The sequence spans 565 residues: Acyl-CoA ligase easD (565 aa).

ATP-binding positions include 213-221 (TSGTSGKQK), 354-359 (HAYGLT), D438, R457, and K555. Residues 284–354 (DMQLMLKTIE…KLRPTWKINH (71 aa)) form an SBD1 region. The SBD2 stretch occupies residues 355–417 (AYGLTETGVV…FNSPSCFLGY (63 aa)).

It belongs to the ATP-dependent AMP-binding enzyme family.

It functions in the pathway antibiotic biosynthesis. Acyl-CoA ligase; part of the gene cluster that mediates the biosynthesis of emericellamides, secondary metabolites acting as antibiotics. The biosynthesis of emericellamides initiates from the highly reducing polyketide synthase easB which catalyzes the formation of the linear polyketide chain. EasB produces several polyketides that can be further processed by the downstream enzymes. The polyketides are released from easB as linear polyketide carboxylic acids, which are converted to CoA thioesters by the acyl-CoA ligase easD. The substrates are then loaded onto the acyltransferase easC, which shuttles them to the first thiolation (T) domain of the nonribosomal peptide synthetase easA. EasA then performs condensation of the polyketides with one glycine, two alanine, one valine and one leucine residues. A last step of cyclization leads to the production of emericellamides. This Emericella nidulans (strain FGSC A4 / ATCC 38163 / CBS 112.46 / NRRL 194 / M139) (Aspergillus nidulans) protein is Acyl-CoA ligase easD.